The chain runs to 162 residues: Phosphopantetheine adenylyltransferase (162 aa).

Thr-14 is a substrate binding site. Residues 14–15 and His-22 each bind ATP; that span reads TF. Residues Lys-46, Leu-78, and Arg-92 each coordinate substrate. ATP-binding positions include 93 to 95, Glu-103, and 128 to 134; these read GLR and HSFISSS.

Belongs to the bacterial CoaD family. As to quaternary structure, homohexamer. It depends on Mg(2+) as a cofactor.

The protein localises to the cytoplasm. It catalyses the reaction (R)-4'-phosphopantetheine + ATP + H(+) = 3'-dephospho-CoA + diphosphate. It participates in cofactor biosynthesis; coenzyme A biosynthesis; CoA from (R)-pantothenate: step 4/5. Functionally, reversibly transfers an adenylyl group from ATP to 4'-phosphopantetheine, yielding dephospho-CoA (dPCoA) and pyrophosphate. This Xylella fastidiosa (strain M23) protein is Phosphopantetheine adenylyltransferase.